Here is a 301-residue protein sequence, read N- to C-terminus: Probable alpha-L-glutamate ligase 1 (301 aa).

Positions 104-287 (LQLLSRKGIG…VTEPIVEYIE (184 aa)) constitute an ATP-grasp domain. ATP contacts are provided by residues K141, 178–179 (EY), D187, and 211–213 (RSN). D248, E260, and N262 together coordinate Mg(2+). Mn(2+) is bound by residues D248, E260, and N262.

The protein belongs to the RimK family. The cofactor is Mg(2+). Mn(2+) serves as cofactor.

The chain is Probable alpha-L-glutamate ligase 1 from Shewanella sp. (strain MR-4).